The sequence spans 148 residues: Small ribosomal subunit protein bS16 (148 aa).

Positions 111 to 122 (AAAGEEPVAEAT) are enriched in low complexity. The interval 111-148 (AAAGEEPVAEATTPKKKGGKKAEAEDKAEEQKSEEGQA) is disordered. Residues 130–148 (KKAEAEDKAEEQKSEEGQA) show a composition bias toward basic and acidic residues.

This sequence belongs to the bacterial ribosomal protein bS16 family.

In Saccharopolyspora erythraea (strain ATCC 11635 / DSM 40517 / JCM 4748 / NBRC 13426 / NCIMB 8594 / NRRL 2338), this protein is Small ribosomal subunit protein bS16.